The primary structure comprises 530 residues: 3-oxo-5-alpha-steroid 4-dehydrogenase (530 aa).

FAD is bound at residue 33–62; it reads DVVVVGWGGAGASAAIEAREQGAEVLVIER. A helical transmembrane segment spans residues 395–415; the sequence is AWQCLFGGLWAFQSMPALALM.

The protein belongs to the FAD-dependent oxidoreductase 2 family. It depends on FAD as a cofactor.

Its subcellular location is the membrane. The catalysed reaction is a 3-oxo-5alpha-steroid + A = a 3-oxo-Delta(4)-steroid + AH2. The enzyme catalyses 5alpha-androstan-3,17-dione + A = androst-4-ene-3,17-dione + AH2. It catalyses the reaction 5alpha-androst-1-ene-3,17-dione + A = androsta-1,4-diene-3,17-dione + AH2. Inhibition occurs with substrate concentrations above 25 uM. Involved in the degradation of steroids having an A:B ring fusion in a trans configuration. Catalyzes the elimination of hydrogens located at positions 4 and 5 and the introduction of double bonds into ring A. The chain is 3-oxo-5-alpha-steroid 4-dehydrogenase from Comamonas testosteroni (Pseudomonas testosteroni).